Consider the following 67-residue polypeptide: Large ribosomal subunit protein bL32 (67 aa).

The segment covering 1–19 has biased composition (basic residues); the sequence is MAVPKRKMSRSNTRARRSQ. The disordered stretch occupies residues 1–21; it reads MAVPKRKMSRSNTRARRSQWK.

Belongs to the bacterial ribosomal protein bL32 family.

The polypeptide is Large ribosomal subunit protein bL32 (Arthrobacter sp. (strain FB24)).